A 55-amino-acid polypeptide reads, in one-letter code: Large ribosomal subunit protein bL33 (55 aa).

It belongs to the bacterial ribosomal protein bL33 family.

This is Large ribosomal subunit protein bL33 from Deinococcus geothermalis (strain DSM 11300 / CIP 105573 / AG-3a).